Here is a 29-residue protein sequence, read N- to C-terminus: Conotoxin Bu17 (29 aa).

Disulfide bonds link Cys4–Cys19, Cys5–Cys25, and Cys15–Cys26. Cysteine amide is present on Cys26.

Belongs to the conotoxin M superfamily. As to expression, expressed by the venom duct.

It localises to the secreted. The polypeptide is Conotoxin Bu17 (Conus bullatus (Bubble cone)).